Reading from the N-terminus, the 371-residue chain is Enterobactin C-glucosyltransferase (371 aa).

This sequence belongs to the glycosyltransferase 28 family.

The protein resides in the cytoplasm. It catalyses the reaction enterobactin + UDP-alpha-D-glucose = monoglucosyl-enterobactin + UDP. The enzyme catalyses monoglucosyl-enterobactin + UDP-alpha-D-glucose = diglucosyl-enterobactin + UDP + H(+). The catalysed reaction is diglucosyl-enterobactin + UDP-alpha-D-glucose = triglucosyl-enterobactin + UDP + H(+). It participates in siderophore biosynthesis; enterobactin biosynthesis. Its function is as follows. Catalyzes the successive monoglucosylation, diglucosylation and triglucosylation of enterobactin (Ent). Transfers glucosyl groups from uridine-5'-diphosphoglucose (UDP-Glc) to C5 of one, two or three of the 2,3-dihydroxybenzoyl (DHB) units of Ent to yield monoglucosyl-C-Ent (MGE), diglucosyl-C-Ent (DGE) and triglucosyl-C-Ent (TGE). Glucosylation decreases the membrane affinity of Ent and increases the iron acquisition rate. This chain is Enterobactin C-glucosyltransferase, found in Escherichia coli O6:H1 (strain CFT073 / ATCC 700928 / UPEC).